The following is a 21-amino-acid chain: Bibrotoxin (21 aa).

Disulfide bonds link C1–C15 and C3–C11.

This sequence belongs to the endothelin/sarafotoxin family. As to expression, expressed by the venom gland.

It localises to the secreted. Functionally, vasoconstrictor activity. These toxins cause cardiac arrest probably as a result of coronary vasospasm. May act by displaying agonistic activities towards endothelin-1 and -2 receptors (EDNRA and EDNRB). In Atractaspis bibronii (Bibron's mole viper), this protein is Bibrotoxin.